The following is a 565-amino-acid chain: Periplasmic trehalase (565 aa).

Positions 1-30 (MKSPAPSRPQKMALIPACIFLCFAALSVQA) are cleaved as a signal peptide. Residues R152, 159 to 160 (WD), N196, 205 to 207 (RSQ), 277 to 279 (RPE), and G310 contribute to the substrate site. Residues D312 and E496 each act as proton donor/acceptor in the active site. E511 is a binding site for substrate. The disordered stretch occupies residues 539–565 (CDNVPATRPLSESTTQPLKQKEAEPTP).

The protein belongs to the glycosyl hydrolase 37 family. Monomer.

Its subcellular location is the periplasm. It carries out the reaction alpha,alpha-trehalose + H2O = alpha-D-glucose + beta-D-glucose. Provides the cells with the ability to utilize trehalose at high osmolarity by splitting it into glucose molecules that can subsequently be taken up by the phosphotransferase-mediated uptake system. This chain is Periplasmic trehalase, found in Escherichia coli O45:K1 (strain S88 / ExPEC).